A 227-amino-acid chain; its full sequence is Flagellar L-ring protein (227 aa).

Positions 1 to 15 (MRTWAVLPILLMLVG) are cleaved as a signal peptide. C16 carries the N-palmitoyl cysteine lipid modification. C16 is lipidated: S-diacylglycerol cysteine.

It belongs to the FlgH family. As to quaternary structure, the basal body constitutes a major portion of the flagellar organelle and consists of four rings (L,P,S, and M) mounted on a central rod.

The protein localises to the cell outer membrane. It localises to the bacterial flagellum basal body. Functionally, assembles around the rod to form the L-ring and probably protects the motor/basal body from shearing forces during rotation. In Syntrophotalea carbinolica (strain DSM 2380 / NBRC 103641 / GraBd1) (Pelobacter carbinolicus), this protein is Flagellar L-ring protein.